Consider the following 101-residue polypeptide: Protein S100-A7 (101 aa).

At Ser2 the chain carries N-acetylserine. EF-hand domains are found at residues 8–42 (QAITDLINLFHKYSGSDDTIEKEDLLRLMKDNFPN) and 50–85 (RGRDYLSNIFEKQDKNKDRKIDFSEFLSLLADIATD). His18 and Asp25 together coordinate Zn(2+). Ca(2+) contacts are provided by Asp63, Asn65, Asp67, Lys69, and Glu74. The Zn(2+) site is built by His87 and His91.

Belongs to the S-100 family. In terms of assembly, interacts with RANBP9.

It is found in the cytoplasm. The protein localises to the secreted. This is Protein S100-A7 (S100A7) from Bos taurus (Bovine).